Consider the following 566-residue polypeptide: Proline--tRNA ligase (566 aa).

The protein belongs to the class-II aminoacyl-tRNA synthetase family. ProS type 1 subfamily. As to quaternary structure, homodimer.

It localises to the cytoplasm. It catalyses the reaction tRNA(Pro) + L-proline + ATP = L-prolyl-tRNA(Pro) + AMP + diphosphate. Functionally, catalyzes the attachment of proline to tRNA(Pro) in a two-step reaction: proline is first activated by ATP to form Pro-AMP and then transferred to the acceptor end of tRNA(Pro). As ProRS can inadvertently accommodate and process non-cognate amino acids such as alanine and cysteine, to avoid such errors it has two additional distinct editing activities against alanine. One activity is designated as 'pretransfer' editing and involves the tRNA(Pro)-independent hydrolysis of activated Ala-AMP. The other activity is designated 'posttransfer' editing and involves deacylation of mischarged Ala-tRNA(Pro). The misacylated Cys-tRNA(Pro) is not edited by ProRS. This chain is Proline--tRNA ligase, found in Bacillus cereus (strain B4264).